The chain runs to 217 residues: Thiamine-phosphate synthase (217 aa).

4-amino-2-methyl-5-(diphosphooxymethyl)pyrimidine is bound by residues 41–45 and Asn76; that span reads QYRDK. Mg(2+)-binding residues include Asp77 and Asp96. 4-amino-2-methyl-5-(diphosphooxymethyl)pyrimidine is bound at residue Ser115. 2-[(2R,5Z)-2-carboxy-4-methylthiazol-5(2H)-ylidene]ethyl phosphate is bound at residue 142–144; the sequence is SPS. Lys145 serves as a coordination point for 4-amino-2-methyl-5-(diphosphooxymethyl)pyrimidine. 2-[(2R,5Z)-2-carboxy-4-methylthiazol-5(2H)-ylidene]ethyl phosphate-binding positions include Gly172 and 192 to 193; that span reads IS.

The protein belongs to the thiamine-phosphate synthase family. It depends on Mg(2+) as a cofactor.

It carries out the reaction 2-[(2R,5Z)-2-carboxy-4-methylthiazol-5(2H)-ylidene]ethyl phosphate + 4-amino-2-methyl-5-(diphosphooxymethyl)pyrimidine + 2 H(+) = thiamine phosphate + CO2 + diphosphate. The catalysed reaction is 2-(2-carboxy-4-methylthiazol-5-yl)ethyl phosphate + 4-amino-2-methyl-5-(diphosphooxymethyl)pyrimidine + 2 H(+) = thiamine phosphate + CO2 + diphosphate. It catalyses the reaction 4-methyl-5-(2-phosphooxyethyl)-thiazole + 4-amino-2-methyl-5-(diphosphooxymethyl)pyrimidine + H(+) = thiamine phosphate + diphosphate. It functions in the pathway cofactor biosynthesis; thiamine diphosphate biosynthesis; thiamine phosphate from 4-amino-2-methyl-5-diphosphomethylpyrimidine and 4-methyl-5-(2-phosphoethyl)-thiazole: step 1/1. Its function is as follows. Condenses 4-methyl-5-(beta-hydroxyethyl)thiazole monophosphate (THZ-P) and 2-methyl-4-amino-5-hydroxymethyl pyrimidine pyrophosphate (HMP-PP) to form thiamine monophosphate (TMP). The sequence is that of Thiamine-phosphate synthase from Acidithiobacillus ferrooxidans (strain ATCC 23270 / DSM 14882 / CIP 104768 / NCIMB 8455) (Ferrobacillus ferrooxidans (strain ATCC 23270)).